The sequence spans 450 residues: MLSNPVVISIIVLLALSLLRINVIIALVIAALTAGFIGDLGLTKTIETFTGGLGGGAEVAMNYAILGAFAIAISKSGITDLIAYKIITKMNKTPTAGNLTWFKYFIFAVLALFAISSQNLLPVHIAFIPIVVPPLLSIFNRLKIDRRAVACVLTFGLTATYILLPVGFGKIFIESILVKNINQAGATLGLQTNVAQVSLAMLLPVIGMILGLLTAIFITYRKPREYNINVEEATTKDIEAHIANIKPKQIVASLIAIVATFATQLVTSSTIIGGLIGLIIFVLCGIFKLKESNDIFQQGLRLMAMIGFVMIAASGFANVINATTGVTDLVQSLSSGVVQSKGIAALLMLVVGLLITMGIGSSFSTVPIITSIYVPLCLSFGFSPLATISIVGVAAALGDAGSPASDSTLGPTSGLNMDGKHDHIWDSVVPTFIHYNIPLLVFGWIAAMYL.

12 helical membrane passes run 10–30 (IIVL…LVIA), 53–73 (LGGG…AIAI), 95–115 (TAGN…LFAI), 120–140 (LLPV…SIFN), 148–168 (AVAC…PVGF), 199–219 (LAML…IFIT), 242–262 (IANI…ATFA), 267–287 (TSST…CGIF), 302–322 (LMAM…VINA), 343–363 (IAAL…GSSF), 378–398 (LSFG…AALG), and 428–448 (VVPT…IAAM).

It localises to the cell membrane. This is an uncharacterized protein from Haemophilus influenzae (strain ATCC 51907 / DSM 11121 / KW20 / Rd).